Here is a 198-residue protein sequence, read N- to C-terminus: Probable GTP-binding protein EngB (198 aa).

The 175-residue stretch at 21–195 (NIPEVCFVGR…YDALIRLLEV (175 aa)) folds into the EngB-type G domain. Residues 29-36 (GRSNVGKS), 56-60 (GKTRL), 75-78 (DAPG), 142-145 (TKLD), and 174-176 (VSN) contribute to the GTP site. Residues Ser-36 and Thr-58 each coordinate Mg(2+).

This sequence belongs to the TRAFAC class TrmE-Era-EngA-EngB-Septin-like GTPase superfamily. EngB GTPase family. The cofactor is Mg(2+).

In terms of biological role, necessary for normal cell division and for the maintenance of normal septation. The protein is Probable GTP-binding protein EngB of Mesoplasma florum (strain ATCC 33453 / NBRC 100688 / NCTC 11704 / L1) (Acholeplasma florum).